The chain runs to 752 residues: Reticulon-1-B (752 aa).

4 disordered regions span residues 1–57, 264–319, 334–424, and 444–465; these read MAAN…TSTD, EYPG…SEKQ, KAKE…SPSI, and ESCD…SPMM. A compositionally biased stretch (polar residues) spans 264-273; the sequence is EYPGNQQGKS. The segment covering 334–361 has biased composition (basic and acidic residues); sequence KAKEGTKRFSSETNDEKQSRSFHAEKQD. Residues 363–383 show a composition bias toward polar residues; the sequence is TVMSTEATSASHYTKASSAES. The Reticulon domain occupies 566 to 752; that stretch reads AIDLLYWRDV…AKIPGTKQKE (187 aa). Helical transmembrane passes span 580–600 and 684–704; these read IVFG…VVSV and VLMW…LLIM.

As to expression, isoform A and isoform C are both expressed in the animal hemisphere (presumptive neural ectoderm) of blastula and gastrula stage embryos, and along the anterior neural border, in the panplacodal primordium, and in the dorsolateral side of archenteron roof of late neurula embryos. At the tailbud stage, expression of the isoforms begin to differ. Isoform A localizes to the cranial placodes including the trigeminal placode, lateral line placode, olfactory placode and otic vesicle. Isoform C localizes to the central nervous system, including the spinal cord, prosencephalon, mesencephalon and rhombencephalon, as well as the lateral line placode, otic vesicle and pronephros.

It is found in the endoplasmic reticulum membrane. Its subcellular location is the nucleus. Functionally, inhibits amyloid precursor protein processing, probably by blocking BACE1 activity. The chain is Reticulon-1-B (rtn1-b) from Xenopus laevis (African clawed frog).